Consider the following 426-residue polypeptide: Diaminobutyrate--2-oxoglutarate transaminase (426 aa).

Lysine 272 is subject to N6-(pyridoxal phosphate)lysine.

It belongs to the class-III pyridoxal-phosphate-dependent aminotransferase family. Pyridoxal 5'-phosphate serves as cofactor.

It carries out the reaction L-2,4-diaminobutanoate + 2-oxoglutarate = L-aspartate 4-semialdehyde + L-glutamate. It functions in the pathway amine and polyamine biosynthesis; ectoine biosynthesis; L-ectoine from L-aspartate 4-semialdehyde: step 1/3. Its function is as follows. Catalyzes reversively the conversion of L-aspartate beta-semialdehyde (ASA) to L-2,4-diaminobutyrate (DABA) by transamination with L-glutamate. This is Diaminobutyrate--2-oxoglutarate transaminase (ectB) from Sporosarcina pasteurii (Bacillus pasteurii).